The chain runs to 351 residues: Peptide chain release factor 1 (351 aa).

Q229 bears the N5-methylglutamine mark. The tract at residues 279–300 (ADAERAADRKSQVGSGDRSERI) is disordered.

The protein belongs to the prokaryotic/mitochondrial release factor family. Methylated by PrmC. Methylation increases the termination efficiency of RF1.

It is found in the cytoplasm. In terms of biological role, peptide chain release factor 1 directs the termination of translation in response to the peptide chain termination codons UAG and UAA. In Paracoccus denitrificans (strain Pd 1222), this protein is Peptide chain release factor 1.